The sequence spans 472 residues: MGIKGLARFLVDNAPKSIQQQSIDSLIGRIIAIDASMWMYQFLAAIREGSQWGNLTNEAGESTSHISGMLSRTIRLLEAGIKPVFVFDGEPPELKMEELMKRKERREKAQQELEKAQEEGDTETIRKQLIRTIKITKEQSDDVKYMLKLLGIPVIEATSEAEAQCAELCKEGLVYGVATEDADSLTFGTPLVIRHLNFSDGKFSDSKGNSKNSLQVIKLSTVLSDLGLSMQQFVDLCILCGCDYCGTIRGIGALTAYKLLKKHKDIETIINELDKNKHPLPMSFDYIKVRELFTNPNVIKAKEFRDKLKWTNPNLEGLSEWLIKQQNFSEVRVANYCTRIKKSKGKTAQTSLDSFFTLTPKKTSENKNKEKEITKVQEVKETISNINKDTRKDSVSEWGEIKTKIIETKEDKLDFERRNKIIQEDKLNSKKEFDYNEKLQCNSTAENTPIIDNKAKVLSIKKRRINRVNYDE.

An N-domain region spans residues 1–106 (MGIKGLARFL…EELMKRKERR (106 aa)). A Mg(2+)-binding site is contributed by Asp-34. DNA-binding residues include Arg-47 and Arg-72. Mg(2+) contacts are provided by Asp-88, Glu-160, Glu-162, Asp-181, and Asp-183. Residues 124–263 (TIRKQLIRTI…LTAYKLLKKH (140 aa)) are I-domain. Glu-160 lines the DNA pocket. Residues Gly-241 and Asp-243 each contribute to the DNA site. Asp-243 is a Mg(2+) binding site. Residues 348–356 (AQTSLDSFF) are interaction with PCNA.

The protein belongs to the XPG/RAD2 endonuclease family. FEN1 subfamily. As to quaternary structure, interacts with PCNA. Three molecules of FEN1 bind to one PCNA trimer with each molecule binding to one PCNA monomer. PCNA stimulates the nuclease activity without altering cleavage specificity. Mg(2+) is required as a cofactor. Phosphorylated. Phosphorylation upon DNA damage induces relocalization to the nuclear plasma.

It is found in the nucleus. The protein localises to the nucleolus. It localises to the nucleoplasm. The protein resides in the mitochondrion. Its function is as follows. Structure-specific nuclease with 5'-flap endonuclease and 5'-3' exonuclease activities involved in DNA replication and repair. During DNA replication, cleaves the 5'-overhanging flap structure that is generated by displacement synthesis when DNA polymerase encounters the 5'-end of a downstream Okazaki fragment. It enters the flap from the 5'-end and then tracks to cleave the flap base, leaving a nick for ligation. Also involved in the long patch base excision repair (LP-BER) pathway, by cleaving within the apurinic/apyrimidinic (AP) site-terminated flap. Acts as a genome stabilization factor that prevents flaps from equilibrating into structures that lead to duplications and deletions. Also possesses 5'-3' exonuclease activity on nicked or gapped double-stranded DNA, and exhibits RNase H activity. Also involved in replication and repair of rDNA and in repairing mitochondrial DNA. The chain is Flap endonuclease 1 from Cryptosporidium muris (strain RN66).